Here is a 295-residue protein sequence, read N- to C-terminus: Pyridoxal 5'-phosphate synthase subunit PdxS (295 aa).

Asp-25 is a binding site for D-ribose 5-phosphate. Lys-82 acts as the Schiff-base intermediate with D-ribose 5-phosphate in catalysis. Residue Gly-154 participates in D-ribose 5-phosphate binding. Arg-166 lines the D-glyceraldehyde 3-phosphate pocket. Residues Gly-215 and 236-237 contribute to the D-ribose 5-phosphate site; that span reads GS.

Belongs to the PdxS/SNZ family. As to quaternary structure, in the presence of PdxT, forms a dodecamer of heterodimers.

It catalyses the reaction aldehydo-D-ribose 5-phosphate + D-glyceraldehyde 3-phosphate + L-glutamine = pyridoxal 5'-phosphate + L-glutamate + phosphate + 3 H2O + H(+). It participates in cofactor biosynthesis; pyridoxal 5'-phosphate biosynthesis. In terms of biological role, catalyzes the formation of pyridoxal 5'-phosphate from ribose 5-phosphate (RBP), glyceraldehyde 3-phosphate (G3P) and ammonia. The ammonia is provided by the PdxT subunit. Can also use ribulose 5-phosphate and dihydroxyacetone phosphate as substrates, resulting from enzyme-catalyzed isomerization of RBP and G3P, respectively. The chain is Pyridoxal 5'-phosphate synthase subunit PdxS from Staphylococcus saprophyticus subsp. saprophyticus (strain ATCC 15305 / DSM 20229 / NCIMB 8711 / NCTC 7292 / S-41).